Reading from the N-terminus, the 131-residue chain is Holo-[acyl-carrier-protein] synthase (131 aa).

2 residues coordinate Mg(2+): Asp9 and Glu58.

It belongs to the P-Pant transferase superfamily. AcpS family. It depends on Mg(2+) as a cofactor.

The protein localises to the cytoplasm. The enzyme catalyses apo-[ACP] + CoA = holo-[ACP] + adenosine 3',5'-bisphosphate + H(+). In terms of biological role, transfers the 4'-phosphopantetheine moiety from coenzyme A to a Ser of acyl-carrier-protein. The sequence is that of Holo-[acyl-carrier-protein] synthase from Salmonella arizonae (strain ATCC BAA-731 / CDC346-86 / RSK2980).